We begin with the raw amino-acid sequence, 354 residues long: Macrosialin (354 aa).

An N-terminal signal peptide occupies residues Met1–Gly21. Residues Asn22 to Ser319 are Extracellular-facing. The mucin-like stretch occupies residues Asp23–Pro140. The segment covering Pro40–His51 has biased composition (low complexity). The disordered stretch occupies residues Pro40–Trp162. The span at Arg52–Thr61 shows a compositional bias: basic residues. The span at His62–Thr84 shows a compositional bias: low complexity. 2 repeat units span residues Thr70–Ala99 and Thr100–Ala129. A 2 X 30 AA tandem repeats region spans residues Thr70 to Ala129. Polar residues predominate over residues Ser85–Gln102. Residues Asn88 and Asn96 are each glycosylated (N-linked (GlcNAc...) asparagine). Residues Gly103–Gly117 are compositionally biased toward low complexity. 2 N-linked (GlcNAc...) asparagine glycosylation sites follow: Asn118 and Asn126. Positions Val121 to Thr135 are enriched in polar residues. Positions Pro140–Ser150 are enriched in pro residues. 5 N-linked (GlcNAc...) asparagine glycosylation sites follow: Asn164, Asn199, Asn246, Asn261, and Asn279. Cys169 and Cys207 are oxidised to a cystine. A disulfide bridge connects residues Cys277 and Cys314. A helical membrane pass occupies residues Ile320–Ile344. Over Arg345–Leu354 the chain is Cytoplasmic.

Belongs to the LAMP family. In terms of processing, N- and O-glycosylated. In terms of tissue distribution, highly expressed by blood monocytes and tissue macrophages. Also expressed in lymphocytes, fibroblasts and endothelial cells. Expressed in many tumor cell lines which could allow them to attach to selectins on vascular endothelium, facilitating their dissemination to secondary sites.

It localises to the cell membrane. It is found in the endosome membrane. Its subcellular location is the lysosome membrane. Functionally, could play a role in phagocytic activities of tissue macrophages, both in intracellular lysosomal metabolism and extracellular cell-cell and cell-pathogen interactions. Binds to tissue- and organ-specific lectins or selectins, allowing homing of macrophage subsets to particular sites. Rapid recirculation of CD68 from endosomes and lysosomes to the plasma membrane may allow macrophages to crawl over selectin-bearing substrates or other cells. The sequence is that of Macrosialin (CD68) from Homo sapiens (Human).